The chain runs to 157 residues: uncharacterized protein (157 aa).

Positions M1 to D11 are enriched in basic and acidic residues. The interval M1–T22 is disordered.

The protein resides in the mitochondrion. This is an uncharacterized protein from Arabidopsis thaliana (Mouse-ear cress).